The chain runs to 438 residues: Serine--tRNA ligase (438 aa).

243-245 contacts L-serine; it reads TAE. ATP is bound at residue 274-276; that stretch reads RSE. L-serine is bound at residue Glu297. 361-364 contributes to the ATP binding site; sequence EISS. Residue Ser396 participates in L-serine binding.

It belongs to the class-II aminoacyl-tRNA synthetase family. Type-1 seryl-tRNA synthetase subfamily. In terms of assembly, homodimer. The tRNA molecule binds across the dimer.

It is found in the cytoplasm. It carries out the reaction tRNA(Ser) + L-serine + ATP = L-seryl-tRNA(Ser) + AMP + diphosphate + H(+). It catalyses the reaction tRNA(Sec) + L-serine + ATP = L-seryl-tRNA(Sec) + AMP + diphosphate + H(+). The protein operates within aminoacyl-tRNA biosynthesis; selenocysteinyl-tRNA(Sec) biosynthesis; L-seryl-tRNA(Sec) from L-serine and tRNA(Sec): step 1/1. Functionally, catalyzes the attachment of serine to tRNA(Ser). Is also able to aminoacylate tRNA(Sec) with serine, to form the misacylated tRNA L-seryl-tRNA(Sec), which will be further converted into selenocysteinyl-tRNA(Sec). In Ralstonia pickettii (strain 12J), this protein is Serine--tRNA ligase.